Consider the following 410-residue polypeptide: Transcription factor Dp-1 (410 aa).

Position 3 is an N6-acetyllysine (Lys3). Phosphoserine is present on Ser23. Residues 73 to 100 (SNTLVVGSPHTPSTHFASQNQPSDSSPW) show a composition bias toward polar residues. The interval 73–116 (SNTLVVGSPHTPSTHFASQNQPSDSSPWSAGKRNRKGEKNGKGL) is disordered. Residues 104 to 116 (KRNRKGEKNGKGL) are compositionally biased toward basic residues. An interaction with CEBPA region spans residues 105–127 (RNRKGEKNGKGLRHFSMKVCEKV). Residues 113–195 (GKGLRHFSMK…KKEIKWIGLP (83 aa)) mediate DNA binding. The DEF box motif lies at 161–195 (DQKNIRRRVYDALNVLMAMNIISKEKKEIKWIGLP). The dimerization stretch occupies residues 204 to 277 (NLEVERQRRL…KKTVIDCSIS (74 aa)). The segment at 211-327 (RRLERIKQKQ…DLKMARSLVP (117 aa)) is enhances binding of RB protein to E2F. The segment at 214-246 (ERIKQKQSQLQELILQQIAFKNLVQRNRHAEQQ) is DCB1. A DCB2 region spans residues 259–315 (LPFIIVNTSKKTVIDCSISNDKFEYLFNFDNTFEIHDDIEVLKRMGMACGLESGSCS). A disordered region spans residues 370–410 (GMLATSSNGSQYSGSRVETPVSYVGEDDEEDDDFNENDEDD). Residues 373-385 (ATSSNGSQYSGSR) are compositionally biased toward polar residues. Residues 394–410 (GEDDEEDDDFNENDEDD) show a composition bias toward acidic residues.

The protein belongs to the E2F/DP family. Component of the E2F:DP transcription factor complex. Forms heterodimers with E2F family members. The complex can interact with hypophosphorylated retinoblastoma protein RB1 and related proteins (RBL1 and RBL2) that inhibit the E2F transactivation domain. This repression involves recruitment of histone deacetylase (HDAC). During the cell cycle, from mid-to-late G1 phase, RB family members become phosphorylated, detach from the DRTF1/E2F complex to render E2F transcriptionally active. Viral oncoproteins, notably E1A, T-antigen and HPV E7, are capable of sequestering RB protein, thus releasing the active complex. Part of the E2F6.com-1 complex in G0 phase is composed of E2F6, MGA, MAX, TFDP1, CBX3, BAT8, EUHMTASE1, RING1, RNF2, MBLR, L3MBTL2 YAF2. Component of the DREAM complex (also named LINC complex) at least composed of E2F4, E2F5, LIN9, LIN37, LIN52, LIN54, MYBL1, MYBL2, RBL1, RBL2, RBBP4, TFDP1 and TFDP2. The complex exists in quiescent cells where it represses cell cycle-dependent genes. It dissociates in S phase when LIN9, LIN37, LIN52 and LIN54 form a subcomplex that binds to MYBL2. The complex TFDP1:E2F1 interacts with CEBPA; the interaction prevents CEBPA binding to target gene promoters and represses its transcriptional activity. In terms of processing, phosphorylation by E2F1-bound cyclin A-CDK2, in the S phase, inhibits E2F-mediated DNA binding and transactivation. Ubiquitinated by the BCR(KBTBD5) complex, leading to its subsequent degradation. As to expression, highest levels in muscle. Also expressed in brain, placenta, liver and kidney. Lower levels in lung and pancreas. Not detected in heart.

The protein localises to the nucleus. Its subcellular location is the cytoplasm. Can stimulate E2F-dependent transcription. Binds DNA cooperatively with E2F family members through the E2 recognition site, 5'-TTTC[CG]CGC-3', found in the promoter region of a number of genes whose products are involved in cell cycle regulation or in DNA replication. The E2F1:DP complex appears to mediate both cell proliferation and apoptosis. Blocks adipocyte differentiation by repressing CEBPA binding to its target gene promoters. This Homo sapiens (Human) protein is Transcription factor Dp-1 (TFDP1).